We begin with the raw amino-acid sequence, 386 residues long: S-adenosylmethionine synthase (386 aa).

H16 provides a ligand contact to ATP. Residue D18 participates in Mg(2+) binding. E44 serves as a coordination point for K(+). Residues E57 and Q100 each coordinate L-methionine. Residues Q100–R110 form a flexible loop region. ATP-binding positions include D165–K167, D240, R246–K247, A263, and K267. D240 contacts L-methionine. Position 271 (K271) interacts with L-methionine.

Belongs to the AdoMet synthase family. Homotetramer; dimer of dimers. Requires Mg(2+) as cofactor. The cofactor is K(+).

The protein localises to the cytoplasm. The catalysed reaction is L-methionine + ATP + H2O = S-adenosyl-L-methionine + phosphate + diphosphate. It participates in amino-acid biosynthesis; S-adenosyl-L-methionine biosynthesis; S-adenosyl-L-methionine from L-methionine: step 1/1. Its function is as follows. Catalyzes the formation of S-adenosylmethionine (AdoMet) from methionine and ATP. The overall synthetic reaction is composed of two sequential steps, AdoMet formation and the subsequent tripolyphosphate hydrolysis which occurs prior to release of AdoMet from the enzyme. The protein is S-adenosylmethionine synthase of Francisella tularensis subsp. holarctica (strain FTNF002-00 / FTA).